Here is a 90-residue protein sequence, read N- to C-terminus: Elongation factor 1-beta (90 aa).

It belongs to the EF-1-beta/EF-1-delta family.

In terms of biological role, promotes the exchange of GDP for GTP in EF-1-alpha/GDP, thus allowing the regeneration of EF-1-alpha/GTP that could then be used to form the ternary complex EF-1-alpha/GTP/AAtRNA. The polypeptide is Elongation factor 1-beta (Desulfurococcus amylolyticus (strain DSM 18924 / JCM 16383 / VKM B-2413 / 1221n) (Desulfurococcus kamchatkensis)).